Consider the following 4007-residue polypeptide: PKS-NRPS hybrid synthetase psoA (4007 aa).

Residues 8–444 (KEPIAIIGTG…GTNCHAIVES (437 aa)) form the Ketosynthase family 3 (KS3) domain. Active-site for beta-ketoacyl synthase activity residues include cysteine 182, histidine 321, and histidine 364. Positions 575–897 (VFTGQGAQWA…VLDRKADDIL (323 aa)) are malonyl-CoA:ACP transacylase (MAT) domain. The interval 969 to 1105 (HPLLGSRTPD…GHIRITLAAE (137 aa)) is N-terminal hotdog fold. Residues 969–1147 (HPLLGSRTPD…LSYSGPFRAM (179 aa)) are dehydratase (DH) domain. The region spanning 969–1276 (HPLLGSRTPD…MSSFLPASEK (308 aa)) is the PKS/mFAS DH domain. Histidine 1001 (proton acceptor; for dehydratase activity) is an active-site residue. The interval 1120–1276 (DLLPTSVDRF…MSSFLPASEK (157 aa)) is C-terminal hotdog fold. Aspartate 1179 (proton donor; for dehydratase activity) is an active-site residue. Positions 2131–2305 (TYLLVGLTGH…PASVIDIGMV (175 aa)) are ketoreductase (KR) domain. One can recognise a Carrier 1 domain in the interval 2418–2495 (EARKVMENAL…QICDEVVASL (78 aa)). Position 2455 is an O-(pantetheine 4'-phosphoryl)serine (serine 2455). Residues 2513–2550 (PAHKLRPWDKPSADTKRTDSIAPVPRSQIAANGPNGLP) are disordered. Basic and acidic residues predominate over residues 2518–2531 (RPWDKPSADTKRTD). Positions 2589 to 2885 (QPLSLGQSRL…LETIPLWFKV (297 aa)) are condensation (C) domain. The segment at 3076–3478 (TYVQLAERAN…LGDVARALVQ (403 aa)) is adenylation (A) domain. The Carrier 2 domain maps to 3576-3652 (TPTEARLRDV…LLAARLDGTS (77 aa)). O-(pantetheine 4'-phosphoryl)serine is present on serine 3612. A reductase (R) domain region spans residues 3696–3920 (LTGATGFLGG…INVETVSNNI (225 aa)).

The protein in the C-terminal section; belongs to the NRP synthetase family.

It functions in the pathway secondary metabolite biosynthesis. PKS-NRPS hybrid synthetase; part of the gene cluster that mediates the biosynthesis of pseurotin A, a competitive inhibitor of chitin synthase and an inducer of nerve-cell proliferation. The PKS-NRPS hybrid synthetase psoA is responsible for the biosynthesis of azaspirene, one of the first intermediates having the 1-oxa-7-azaspiro[4,4]-non-2-ene-4,6-dione core of pseurotin, via condensation of one acetyl-CoA, 4 malonyl-CoA, and a L-phenylalanine molecule. The dual-functional monooxygenase/methyltransferase psoF seems to be involved in the addition of the C3 methyl group onto the pseurotin scaffold. Azaspirene is then converted to synerazol through 4 steps including oxidation of C17 by the cytochrome P450 monooxygenase psoD, O-methylation of the hydroxy group of C8 by the methyltransferase psoC, and the trans-to-cis isomerization of the C13 olefin by the glutathione S-transferase psoE. The fourth step of synerazol production is performed by the dual-functional monooxygenase/methyltransferase psoF which seems to catalyze the epoxidation of the intermediate deepoxy-synerazol. Synerazol can be attacked by a water molecule nonenzymatically at two different positions to yield two diol products, pseurotin A and pseurotin D. The chain is PKS-NRPS hybrid synthetase psoA from Aspergillus fumigatus (strain ATCC MYA-4609 / CBS 101355 / FGSC A1100 / Af293) (Neosartorya fumigata).